Here is a 510-residue protein sequence, read N- to C-terminus: Fumarate hydratase, mitochondrial (510 aa).

A mitochondrion-targeting transit peptide spans 1 to 44; it reads MYRALRLLARSRPLVRAPAAALASAPGLGGAAVPSFWPPNAARM. N6-acetyllysine; alternate occurs at positions 61, 66, and 80. Lysine 61, lysine 66, and lysine 80 each carry N6-succinyllysine; alternate. Phosphothreonine occurs at positions 85 and 90. Lysine 94 is subject to N6-acetyllysine. 2 positions are modified to N6-acetyllysine; alternate: lysine 115 and lysine 122. Lysine 115 and lysine 122 each carry N6-succinyllysine; alternate. Substrate is bound by residues 145–147, 176–179, and 186–188; these read SGT, HPND, and SSN. Lysine 213 carries the N6-acetyllysine modification. Residue lysine 223 is modified to N6-acetyllysine; alternate. The residue at position 223 (lysine 223) is an N6-succinyllysine; alternate. Threonine 234 serves as a coordination point for substrate. Residue histidine 235 is the Proton donor/acceptor of the active site. Phosphothreonine; by PRKDC is present on threonine 236. An N6-acetyllysine modification is found at lysine 256. Residue lysine 292 is modified to N6-acetyllysine; alternate. At lysine 292 the chain carries N6-succinyllysine; alternate. Serine 365 is a catalytic residue. Residues serine 366 and 371–373 contribute to the substrate site; that span reads KVN. Serine 366 bears the Phosphoserine mark. Residues lysine 467 and lysine 473 each carry the N6-succinyllysine modification. Lysine 502 carries the N6-acetyllysine modification.

The protein belongs to the class-II fumarase/aspartase family. Fumarase subfamily. In terms of assembly, homotetramer. Interacts with H2AZ1. In terms of processing, phosphorylation at Thr-236 by PRKDC in response to DNA damage promotes translocation to the nucleus and recruitment to DNA double-strand breaks (DSBs). As to expression, expressed in red blood cells; underexpressed in red blood cells (cytoplasm) of patients with hereditary non-spherocytic hemolytic anemia of unknown etiology.

The protein localises to the mitochondrion. Its subcellular location is the cytoplasm. It is found in the cytosol. It localises to the nucleus. The protein resides in the chromosome. The catalysed reaction is (S)-malate = fumarate + H2O. The protein operates within carbohydrate metabolism; tricarboxylic acid cycle; (S)-malate from fumarate: step 1/1. In terms of biological role, catalyzes the reversible stereospecific interconversion of fumarate to L-malate. Experiments in other species have demonstrated that specific isoforms of this protein act in defined pathways and favor one direction over the other. Catalyzes the hydration of fumarate to L-malate in the tricarboxylic acid (TCA) cycle to facilitate a transition step in the production of energy in the form of NADH. Functionally, catalyzes the dehydration of L-malate to fumarate. Fumarate metabolism in the cytosol plays a role during urea cycle and arginine metabolism; fumarate being a by-product of the urea cycle and amino-acid catabolism. Also plays a role in DNA repair by promoting non-homologous end-joining (NHEJ). In response to DNA damage and phosphorylation by PRKDC, translocates to the nucleus and accumulates at DNA double-strand breaks (DSBs): acts by catalyzing formation of fumarate, an inhibitor of KDM2B histone demethylase activity, resulting in enhanced dimethylation of histone H3 'Lys-36' (H3K36me2). In Homo sapiens (Human), this protein is Fumarate hydratase, mitochondrial.